Consider the following 217-residue polypeptide: Uracil-DNA glycosylase (217 aa).

The Proton acceptor role is filled by D62.

Belongs to the uracil-DNA glycosylase (UDG) superfamily. UNG family.

The protein localises to the cytoplasm. The enzyme catalyses Hydrolyzes single-stranded DNA or mismatched double-stranded DNA and polynucleotides, releasing free uracil.. In terms of biological role, excises uracil residues from the DNA which can arise as a result of misincorporation of dUMP residues by DNA polymerase or due to deamination of cytosine. The protein is Uracil-DNA glycosylase of Streptococcus suis (strain 98HAH33).